A 1265-amino-acid polypeptide reads, in one-letter code: Kinesin-like protein Klp98A (1265 aa).

Residues 3-364 (SLKVAVRVRP…LRYANRAKNI (362 aa)) form the Kinesin motor domain. 100 to 107 (GQTGSGKT) contributes to the ATP binding site. Disordered regions lie at residues 597–621 (GASPYKRPERQYYPQRPMSRDDPEL), 828–864 (EAESQAMRAKKQNMKLQLGNKSMSTSTSTNEADDVSK), and 884–954 (VSSP…CTPS). 2 coiled-coil regions span residues 619-670 (PELQ…EEMD) and 768-848 (AQFI…LGNK). Composition is skewed to polar residues over residues 846-857 (GNKSMSTSTSTN), 884-901 (VSSPTITEGQQSPLSNCS), and 917-927 (SGSSEETSRTC). Gly residues predominate over residues 933–946 (SGSGSGSVGIGGSG). The stretch at 1035–1071 (DLNKAQLDEHIADLQDLQRRYIQMEQEMLQSVQDLEA) forms a coiled coil. The region spanning 1129–1259 (GEHFITIPSF…SFFKKGLFEN (131 aa)) is the PX domain.

The protein belongs to the TRAFAC class myosin-kinesin ATPase superfamily. Kinesin family. Interacts with Atg8a and Rab14.

Its subcellular location is the early endosome. In terms of biological role, plus end-directed motor protein involved in asymmetric cell division of sensory organ precursor (SOP) cells by playing a role in the asymmetric localization of Sara-expressing endosomes to the pIIa daughter cell but not to the pIIb cell. Targets Sara-expressing endosomes to the central spindle which is symmetrically arranged in early cell division. During late cytokinesis, central spindle asymmetry is generated by enrichment of Patronin on the pIIb side which protects microtubules from depolymerization by Klp10A while unprotected microtubules on the pIIa side are disassembled by Klp10A, leading to the asymmetric delivery of Sara-expressing endosomes to the pIIa daughter cell. Also plays a role in regulation of autophagosome formation, fusion and positioning and is required for normal localization of Rab14. This Drosophila melanogaster (Fruit fly) protein is Kinesin-like protein Klp98A.